A 355-amino-acid chain; its full sequence is Cyanide hydratase (355 aa).

In terms of domain architecture, CN hydrolase spans 6–285 (YKAAAVTSEP…DGLLFVDIDL (280 aa)). E46 (proton acceptor) is an active-site residue. K128 is an active-site residue. The active-site Nucleophile is the C163.

The protein belongs to the carbon-nitrogen hydrolase superfamily. Nitrilase family. As to quaternary structure, oligomer of dimers, forming left-handed helical fibers.

The enzyme catalyses formamide = hydrogen cyanide + H2O. Its function is as follows. Catalyzes the hydration of cyanide to formamide. Degradation of cyanide may be important for plant pathogenic fungi in infection of cyanogenic plants. This chain is Cyanide hydratase, found in Gibberella zeae (strain ATCC MYA-4620 / CBS 123657 / FGSC 9075 / NRRL 31084 / PH-1) (Wheat head blight fungus).